A 617-amino-acid polypeptide reads, in one-letter code: Sphingosine kinase 2 (617 aa).

Residues M1–E140 form a required for binding to sulfatide and phosphoinositides and for membrane localization region. The short motif at R87 to R95 is the Nuclear localization signal element. Residues P143 to S290 enclose the DAGKc domain. ATP-binding positions include N153–F155 and T185–N189. S210–G213 contacts substrate. D212 functions as the Proton donor/acceptor in the catalytic mechanism. ATP is bound by residues E217 and G242 to G244. Residue D309 coordinates substrate. Positions 316 and 322 each coordinate ATP. 2 positions are modified to phosphoserine: S358 and S364. The disordered stretch occupies residues A371 to P472. T377 carries the phosphothreonine modification. The Nuclear export signal motif lies at L381–L390. 2 positions are modified to phosphoserine: S384 and S386. The segment covering N412 to G426 has biased composition (gly residues). T578 is modified (phosphothreonine). D586–E588 provides a ligand contact to ATP.

Interacts with histone H3. Interacts with HDAC1, HDAC2, MBD2 and SIN3A. Interacts with EEF1A1; the interaction enhances SPHK2 kinase activity. Interacts with PHB2. Requires Mg(2+) as cofactor. In terms of processing, phosphorylated by PKD on Ser-384 and Ser-386 upon PMA treatment. Phosphorylation induces export from the nucleus to the cytoplasm. Phosphorylated by MAPK1 and MAPK2 at Thr-578, phosphorylation is induced by agonists such as EGF and PMA and increases kinase activity. Post-translationally, cleaved by CASP1 in apoptotic cells. The truncated form is released from cells. Expressed in heart, brain, liver, kidney and testis. Expressed by mast cells (at protein level). In the substantia nigra, expressed by dopaminergic neurons (at protein level).

The protein localises to the lysosome membrane. It is found in the cytoplasm. The protein resides in the cell membrane. It localises to the endoplasmic reticulum. Its subcellular location is the nucleus. The protein localises to the mitochondrion inner membrane. The catalysed reaction is a sphingoid base + ATP = a sphingoid 1-phosphate + ADP + H(+). The enzyme catalyses sphing-4-enine + ATP = sphing-4-enine 1-phosphate + ADP + H(+). It catalyses the reaction sphinganine + ATP = sphinganine 1-phosphate + ADP + H(+). It carries out the reaction (4R)-hydroxysphinganine + ATP = (4R)-hydroxysphinganine 1-phosphate + ADP + H(+). In terms of biological role, catalyzes the phosphorylation of sphingosine to form sphingosine-1-phosphate (SPP), a lipid mediator with both intra- and extracellular functions. Also acts on D-erythro-dihydrosphingosine, D-erythro-sphingosine and L-threo-dihydrosphingosine. Binds phosphoinositides. In contrast to prosurvival SPHK1, has a positive effect on intracellular ceramide levels, inhibits cells growth and enhances apoptosis. In mitochondria, is important for cytochrome-c oxidase assembly and mitochondrial respiration. The SPP produced in mitochondria binds PHB2 and modulates the regulation via PHB2 of complex IV assembly and respiration. In nucleus, plays a role in epigenetic regulation of gene expression. Interacts with HDAC1 and HDAC2 and, through SPP production, inhibits their enzymatic activity, preventing the removal of acetyl groups from lysine residues with histones. Up-regulates acetylation of histone H3-K9, histone H4-K5 and histone H2B-K12. In nucleus, may have an inhibitory effect on DNA synthesis and cell cycle. In mast cells, is the main regulator of SPP production which mediates calcium influx, NF-kappa-B activation, cytokine production, such as TNF and IL6, and degranulation of mast cells. In dopaminergic neurons, is involved in promoting mitochondrial functions regulating ATP and ROS levels. Also involved in the regulation of glucose and lipid metabolism. The chain is Sphingosine kinase 2 from Mus musculus (Mouse).